Reading from the N-terminus, the 171-residue chain is MSDTTQPPADDAQNVPPAMPLTINVQYIKDLSFEVPAGAEIFATLRANPQIAVNIDVQANRLQAEHPVFEVVLAIKTEALEAPEKEGAAPGRPVFIAELAYGAVVTLTNAPDELVEPILLVEVPRLIFPYVRNIISEVTRDGGFPPVVLQPIDFVALWQAKRSFPQTAGNA.

The protein belongs to the SecB family. Homotetramer, a dimer of dimers. One homotetramer interacts with 1 SecA dimer.

Its subcellular location is the cytoplasm. One of the proteins required for the normal export of preproteins out of the cell cytoplasm. It is a molecular chaperone that binds to a subset of precursor proteins, maintaining them in a translocation-competent state. It also specifically binds to its receptor SecA. The chain is Protein-export protein SecB from Gluconacetobacter diazotrophicus (strain ATCC 49037 / DSM 5601 / CCUG 37298 / CIP 103539 / LMG 7603 / PAl5).